The following is a 166-amino-acid chain: Peptide methionine sulfoxide reductase MsrA (166 aa).

Cys-11 is an active-site residue.

It belongs to the MsrA Met sulfoxide reductase family.

The enzyme catalyses L-methionyl-[protein] + [thioredoxin]-disulfide + H2O = L-methionyl-(S)-S-oxide-[protein] + [thioredoxin]-dithiol. It carries out the reaction [thioredoxin]-disulfide + L-methionine + H2O = L-methionine (S)-S-oxide + [thioredoxin]-dithiol. Functionally, has an important function as a repair enzyme for proteins that have been inactivated by oxidation. Catalyzes the reversible oxidation-reduction of methionine sulfoxide in proteins to methionine. This Lachnoclostridium phytofermentans (strain ATCC 700394 / DSM 18823 / ISDg) (Clostridium phytofermentans) protein is Peptide methionine sulfoxide reductase MsrA.